The primary structure comprises 76 residues: ATP synthase subunit 9, mitochondrial (76 aa).

2 helical membrane-spanning segments follow: residues 14-34 and 52-72; these read MATLGLGGAAIGIALVFVALI and ILGFALAEACGLFCLMMSFLL.

Belongs to the ATPase C chain family. In terms of assembly, F-type ATPases have 2 components, CF(1) - the catalytic core - and CF(0) - the membrane proton channel. CF(1) has five subunits: alpha(3), beta(3), gamma(1), delta(1), epsilon(1). CF(0) has three main subunits: a, b and c.

Its subcellular location is the mitochondrion membrane. In terms of biological role, mitochondrial membrane ATP synthase (F(1)F(0) ATP synthase or Complex V) produces ATP from ADP in the presence of a proton gradient across the membrane which is generated by electron transport complexes of the respiratory chain. F-type ATPases consist of two structural domains, F(1) - containing the extramembraneous catalytic core and F(0) - containing the membrane proton channel, linked together by a central stalk and a peripheral stalk. During catalysis, ATP synthesis in the catalytic domain of F(1) is coupled via a rotary mechanism of the central stalk subunits to proton translocation. Part of the complex F(0) domain. A homomeric c-ring of probably 10 subunits is part of the complex rotary element. The protein is ATP synthase subunit 9, mitochondrial (ATP9) of Debaryomyces hansenii (strain ATCC 36239 / CBS 767 / BCRC 21394 / JCM 1990 / NBRC 0083 / IGC 2968) (Yeast).